The following is a 470-amino-acid chain: ATP synthase subunit beta (470 aa).

Gly157–Thr164 is a binding site for ATP.

It belongs to the ATPase alpha/beta chains family. F-type ATPases have 2 components, CF(1) - the catalytic core - and CF(0) - the membrane proton channel. CF(1) has five subunits: alpha(3), beta(3), gamma(1), delta(1), epsilon(1). CF(0) has three main subunits: a(1), b(2) and c(9-12). The alpha and beta chains form an alternating ring which encloses part of the gamma chain. CF(1) is attached to CF(0) by a central stalk formed by the gamma and epsilon chains, while a peripheral stalk is formed by the delta and b chains.

It is found in the cell inner membrane. The enzyme catalyses ATP + H2O + 4 H(+)(in) = ADP + phosphate + 5 H(+)(out). Produces ATP from ADP in the presence of a proton gradient across the membrane. The catalytic sites are hosted primarily by the beta subunits. The chain is ATP synthase subunit beta from Geotalea uraniireducens (strain Rf4) (Geobacter uraniireducens).